A 103-amino-acid polypeptide reads, in one-letter code: Small ribosomal subunit protein uS10 (103 aa).

This sequence belongs to the universal ribosomal protein uS10 family. In terms of assembly, part of the 30S ribosomal subunit.

Involved in the binding of tRNA to the ribosomes. The protein is Small ribosomal subunit protein uS10 of Aromatoleum aromaticum (strain DSM 19018 / LMG 30748 / EbN1) (Azoarcus sp. (strain EbN1)).